Consider the following 485-residue polypeptide: ATP-dependent protease ATPase subunit HslU (485 aa).

ATP-binding positions include Ile-22 and 64-69; that span reads GVGKTE. The disordered stretch occupies residues 146–189; sequence KKTAATSAQPQDVSQASSGTTISLPSVSSTAQAEEHKAQNENDM. The segment covering 149-177 has biased composition (polar residues); that stretch reads AATSAQPQDVSQASSGTTISLPSVSSTAQ. Over residues 178–189 the composition is skewed to basic and acidic residues; sequence AEEHKAQNENDM. Residues Asp-297, Glu-363, and Arg-435 each coordinate ATP.

Belongs to the ClpX chaperone family. HslU subfamily. In terms of assembly, a double ring-shaped homohexamer of HslV is capped on each side by a ring-shaped HslU homohexamer. The assembly of the HslU/HslV complex is dependent on binding of ATP.

It is found in the cytoplasm. Functionally, ATPase subunit of a proteasome-like degradation complex; this subunit has chaperone activity. The binding of ATP and its subsequent hydrolysis by HslU are essential for unfolding of protein substrates subsequently hydrolyzed by HslV. HslU recognizes the N-terminal part of its protein substrates and unfolds these before they are guided to HslV for hydrolysis. This is ATP-dependent protease ATPase subunit HslU from Treponema denticola (strain ATCC 35405 / DSM 14222 / CIP 103919 / JCM 8153 / KCTC 15104).